We begin with the raw amino-acid sequence, 564 residues long: Phenylalanine--tRNA ligase beta subunit (564 aa).

The B5 domain maps to 286–362 (YFQNSLKINV…IGKGLDNFKS (77 aa)). Mg(2+)-binding residues include Asp340, Asp346, Glu349, and Glu350.

It belongs to the phenylalanyl-tRNA synthetase beta subunit family. Type 2 subfamily. As to quaternary structure, tetramer of two alpha and two beta subunits. Requires Mg(2+) as cofactor.

The protein resides in the cytoplasm. It carries out the reaction tRNA(Phe) + L-phenylalanine + ATP = L-phenylalanyl-tRNA(Phe) + AMP + diphosphate + H(+). This chain is Phenylalanine--tRNA ligase beta subunit, found in Borrelia recurrentis (strain A1).